We begin with the raw amino-acid sequence, 248 residues long: Meiotically up-regulated gene 110 protein (248 aa).

Residues leucine 23–isoleucine 43 traverse the membrane as a helical segment.

The protein resides in the membrane. In terms of biological role, has a role in meiosis. In Schizosaccharomyces pombe (strain 972 / ATCC 24843) (Fission yeast), this protein is Meiotically up-regulated gene 110 protein (mug110).